A 54-amino-acid chain; its full sequence is Large ribosomal subunit protein bL32c (54 aa).

It belongs to the bacterial ribosomal protein bL32 family.

The protein localises to the plastid. Its subcellular location is the chloroplast. In Cucumis sativus (Cucumber), this protein is Large ribosomal subunit protein bL32c.